The following is a 476-amino-acid chain: Bifunctional protein HldE (476 aa).

The segment at 1–318 (MKPTLPNYDQ…AEAIHGSQDS (318 aa)) is ribokinase. An ATP-binding site is contributed by 195 to 198 (NMLE). Residue aspartate 264 is part of the active site. The cytidylyltransferase stretch occupies residues 344 to 476 (MTNGCFDILH…IIEAIKGGRG (133 aa)).

It in the N-terminal section; belongs to the carbohydrate kinase PfkB family. This sequence in the C-terminal section; belongs to the cytidylyltransferase family. In terms of assembly, homodimer.

The catalysed reaction is D-glycero-beta-D-manno-heptose 7-phosphate + ATP = D-glycero-beta-D-manno-heptose 1,7-bisphosphate + ADP + H(+). It catalyses the reaction D-glycero-beta-D-manno-heptose 1-phosphate + ATP + H(+) = ADP-D-glycero-beta-D-manno-heptose + diphosphate. It participates in nucleotide-sugar biosynthesis; ADP-L-glycero-beta-D-manno-heptose biosynthesis; ADP-L-glycero-beta-D-manno-heptose from D-glycero-beta-D-manno-heptose 7-phosphate: step 1/4. It functions in the pathway nucleotide-sugar biosynthesis; ADP-L-glycero-beta-D-manno-heptose biosynthesis; ADP-L-glycero-beta-D-manno-heptose from D-glycero-beta-D-manno-heptose 7-phosphate: step 3/4. Functionally, catalyzes the phosphorylation of D-glycero-D-manno-heptose 7-phosphate at the C-1 position to selectively form D-glycero-beta-D-manno-heptose-1,7-bisphosphate. Catalyzes the ADP transfer from ATP to D-glycero-beta-D-manno-heptose 1-phosphate, yielding ADP-D-glycero-beta-D-manno-heptose. The sequence is that of Bifunctional protein HldE from Aliivibrio fischeri (strain MJ11) (Vibrio fischeri).